The primary structure comprises 399 residues: MLLTVYCVRRDLSEVTFSLQVDADFELHNFRALCELESGIPAAESQIVYAERPLTDNHRSLASYGLKDGDVVILRQKENADPRPPVQFPNLPRIDFSSIAVPGTSSPRQRQPPGTQQSHSSPGEITSSPQGLDNPALLRDMLLANPHELSLLKERNPPLAEALLSGDLEKFSRVLVEQQQDRARREQERIRLFSADPFDLEAQAKIEEDIRQQNIEENMTIAMEEAPESFGQVVMLYINCKVNGHPVKAFVDSGAQMTIMSQACAERCNIMRLVDRRWAGIAKGVGTQKIIGRVHLAQVQIEGDFLPCSFSILEEQPMDMLLGLDMLKRHQCSIDLKKNVLVIGTTGSQTTFLPEGELPECARLAYGAGREDVRPEEIADQELAEALQKSAEDAERQKP.

The region spanning 1–81 (MLLTVYCVRR…VILRQKENAD (81 aa)) is the Ubiquitin-like domain. The interval 99–134 (IAVPGTSSPRQRQPPGTQQSHSSPGEITSSPQGLDN) is disordered. Residues 103 to 131 (GTSSPRQRQPPGTQQSHSSPGEITSSPQG) are compositionally biased toward polar residues. Position 104 is a phosphothreonine (T104). S106, S121, S128, S150, and S194 each carry phosphoserine. D252 is a catalytic residue. The Ubiquitin-binding motif lies at 376–395 (EEIADQELAEALQKSAEDAE).

This sequence belongs to the DDI1 family. As to quaternary structure, homodimer. Interacts with MCM6; PCNA; PSMD4; PSMD8; RPA2 and RPN2. Interacts with RTF2.

It localises to the cytoplasm. It is found in the cytosol. The protein resides in the chromosome. Functionally, aspartic protease that mediates the cleavage of NFE2L1/NRF1 at 'Leu-104', thereby promoting release of NFE2L1/NRF1 from the endoplasmic reticulum membrane. Ubiquitination of NFE2L1/NRF1 is a prerequisite for cleavage, suggesting that DDI2 specifically recognizes and binds ubiquitinated NFE2L1/NRF1. Seems to act as a proteasomal shuttle which links the proteasome and replication fork proteins like RTF2. Required, with DDI1, for cellular survival following replication stress. Together or redudantly with DDI1, removes RTF2 from stalled forks to allow cell cycle progression after replication stress and maintains genome integrity. The protein is Protein DDI1 homolog 2 of Homo sapiens (Human).